A 307-amino-acid chain; its full sequence is Potassium channel subfamily K member 7 (307 aa).

The Cytoplasmic segment spans residues 1-10; the sequence is MGSLKPWARY. A helical membrane pass occupies residues 11–31; the sequence is LLLLMAHLLAMGLGAVVLQAL. Asparagine 83 carries N-linked (GlcNAc...) asparagine glycosylation. An intramembrane region (pore-forming) is located at residues 92 to 118; sequence LPSALLFTASILTTTGYGHMAPLSSGG. The chain crosses the membrane as a helical span at residues 120–140; it reads AFCVVYAALGLPASLALVAAL. Over 141-172 the chain is Cytoplasmic; it reads RHCLLPVFSRPGDWVAIRWQLAPAQAALLQAA. A helical membrane pass occupies residues 173 to 193; the sequence is GLGLLVACVFMLLPALVLWGV. The segment at residues 199 to 227 is an intramembrane region (pore-forming); sequence LLEAIYFCFGSLSTIGLGDLLPAHGRGLH. The chain crosses the membrane as a helical span at residues 233–253; that stretch reads LGQFALLGYLLLGLLAMLLAV. Residues 254 to 307 are Cytoplasmic-facing; the sequence is ETFSELPQVRAMVKFFGPSGSRTDEDQDGILGQDELALSTVLPDAPVLGPTTPA.

Belongs to the two pore domain potassium channel (TC 1.A.1.8) family. Homodimer. As to expression, detected in embryo, eye, lung and liver. Weakly expressed in colon, testis, atria, kidney, intestine, bladder, uterus, ovary, salivary gland, thymus and brain stem. Not detected in brain, cerebellum, spinal cord, heart, ventricle, skeletal muscle, liver, placenta and pancreas. In the eye, highly expressed in the retinal ganglion cell layer and inner nuclear layer.

Its subcellular location is the membrane. Probable potassium channel subunit. No channel activity observed in vitro as protein remains in the endoplasmic reticulum. May need to associate with an as yet unknown partner in order to reach the plasma membrane. The chain is Potassium channel subfamily K member 7 (Kcnk7) from Mus musculus (Mouse).